The primary structure comprises 415 residues: ATP-dependent Clp protease ATP-binding subunit ClpX (415 aa).

Residues 1–54 form the ClpX-type ZB domain; the sequence is MARNRMGGALICSFCNKPESSERFVVPGPGGIAICDRCVDLCESYIKSYKTVRP. Residues cysteine 12, cysteine 15, cysteine 35, and cysteine 38 each coordinate Zn(2+). 117–124 lines the ATP pocket; it reads PTGSGKTL.

This sequence belongs to the ClpX chaperone family. In terms of assembly, component of the ClpX-ClpP complex. Forms a hexameric ring that, in the presence of ATP, binds to fourteen ClpP subunits assembled into a disk-like structure with a central cavity, resembling the structure of eukaryotic proteasomes.

Functionally, ATP-dependent specificity component of the Clp protease. It directs the protease to specific substrates. Can perform chaperone functions in the absence of ClpP. The polypeptide is ATP-dependent Clp protease ATP-binding subunit ClpX (Treponema denticola (strain ATCC 35405 / DSM 14222 / CIP 103919 / JCM 8153 / KCTC 15104)).